Reading from the N-terminus, the 204-residue chain is Somatotropin (204 aa).

Positions 1–17 (MDRVLLLLSVLSLGVSS) are cleaved as a signal peptide. Pyrrolidone carboxylic acid is present on glutamine 18. Histidine 36 is a binding site for Zn(2+). A disulfide bond links cysteine 69 and cysteine 177. Glutamate 186 contributes to the Zn(2+) binding site. An intrachain disulfide couples cysteine 194 to cysteine 202.

Belongs to the somatotropin/prolactin family.

Its subcellular location is the secreted. Its function is as follows. Growth hormone plays an important role in growth control and is involved in the regulation of several anabolic processes. Implicated as an osmoregulatory substance important for seawater adaptation. This chain is Somatotropin (gh), found in Sciaenops ocellatus (Red drum).